We begin with the raw amino-acid sequence, 155 residues long: Myosin light chain alkali (155 aa).

EF-hand domains follow at residues 7–41 (REVE…LNLN) and 80–115 (GCYE…LGES).

Myosin is a hexamer of 2 heavy chains and 4 light chains. As to expression, indirect flight muscle isoform is found only in the indirect flight muscles. The larval and adult isoform is present in the larval and adult musculature.

In Drosophila melanogaster (Fruit fly), this protein is Myosin light chain alkali (Mlc1).